The chain runs to 407 residues: M protein, serotype 2.1 (407 aa).

The signal sequence occupies residues 1 to 41 (MARKDTNKQYSLRKLKTGTASVAVAVAVLGAGFANQTTVKA). The interval 81 to 94 (VEEEHKKVEEEHKK) is 2 X 7 AA tandem repeats. Composition is skewed to basic and acidic residues over residues 83–144 (EEHK…KRYQ), 152–229 (QLEK…EKQI), 237–264 (LSRDLEASRAAKKDLEAEHQKLKEEKQI), and 272–288 (LSRDLEASREAKKKVEA). Residues 83–289 (EEHKKVEEEH…REAKKKVEAD (207 aa)) form a disordered region. C repeat units follow at residues 151–185 (QQLEKEKQISEASRKSLRRDLEASRAAKKDLEAEH), 186–220 (QKLKEEKQISEASRKSLRRDLEASRAAKKDLEAEH), 221–255 (QKLKEEKQISEASRQGLSRDLEASRAAKKDLEAEH), and 256–290 (QKLKEEKQISEASRQGLSRDLEASREAKKKVEADL). D repeat units lie at residues 323–328 (AKLEAE), 329–334 (AKALKE), 337–342 (AKQAEE), and 344–349 (AKLKGN). The segment at 344-382 (AKLKGNQTPNAKVAPQANRSRSAMTQQKRTLPSTGETAN) is disordered. Residues 360–380 (ANRSRSAMTQQKRTLPSTGET) are compositionally biased toward polar residues. Residues 374–378 (LPSTG) carry the LPXTG sorting signal motif. Pentaglycyl murein peptidoglycan amidated threonine is present on T377. A propeptide spans 378-407 (GETANPFFTAAAATVMVSAGMLALKRKEEN) (removed by sortase).

It belongs to the M protein family.

It is found in the secreted. It localises to the cell wall. In terms of biological role, this protein is one of the different antigenic serotypes of protein M. Protein M is closely associated with virulence of the bacterium and can render the organism resistant to phagocytosis. The chain is M protein, serotype 2.1 (emmL2.1) from Streptococcus pyogenes.